The sequence spans 221 residues: Bcl-2-related ovarian killer protein homolog A (221 aa).

The short motif at Lys32–His44 is the BH4 element. The short motif at Val64–Pro80 is the BH3 element. Residues Glu110 to Gly140 carry the BH1 motif. A BH2 motif is present at residues Trp173–Val187. Residues Trp198–Leu218 traverse the membrane as a helical segment.

Belongs to the Bcl-2 family. As to expression, strongest expression in ovary and eye, weaker expression in gut, kidney and brain. Little expression in liver or heart.

The protein resides in the membrane. Its function is as follows. May play a role in apoptosis. Does not appear to show pro-apoptotic activity when expressed ectopically in early embryos. In Danio rerio (Zebrafish), this protein is Bcl-2-related ovarian killer protein homolog A.